The following is a 683-amino-acid chain: Rhophilin-2-A (683 aa).

Residues 25 to 99 form the REM-1 domain; the sequence is KSIAQTGRSK…LERLNISVEV (75 aa). A BRO1 domain is found at 110–501; that stretch reads PLIPLGLKET…TDIFQRLGPL (392 aa). The PDZ domain occupies 515–592; it reads KICITKEDGD…QSIEIQVISI (78 aa).

Belongs to the RHPN family. As to quaternary structure, interacts with RhoA.

It localises to the cytoplasm. Its subcellular location is the perinuclear region. Its function is as follows. Binds specifically to GTP-Rho. The polypeptide is Rhophilin-2-A (rhpn2-a) (Xenopus laevis (African clawed frog)).